The primary structure comprises 96 residues: MSETGETSEYYKQALEEYKEVQEDEDPDVWDTRISKTGCYVENLALQLCHAETGDWRQCFNEMALFRKCWEKNGNRERVSTVDVDGTTSKDSEKKK.

The region spanning 36–77 is the CHCH domain; sequence KTGCYVENLALQLCHAETGDWRQCFNEMALFRKCWEKNGNRE. 2 consecutive short sequence motifs (cx9C motif) follow at residues 39 to 49 and 59 to 69; these read CYVENLALQLC and CFNEMALFRKC. Disulfide bonds link Cys-39/Cys-69 and Cys-49/Cys-59.

Belongs to the COA4 family.

The protein resides in the mitochondrion inner membrane. It is found in the mitochondrion intermembrane space. In terms of biological role, involved in cytochrome c oxidase assembly or stability. The chain is Cytochrome oxidase assembly factor 4 (COA4) from Saccharomyces cerevisiae (strain ATCC 204508 / S288c) (Baker's yeast).